Here is a 291-residue protein sequence, read N- to C-terminus: Pentonolactonase XacC (291 aa).

A divalent metal cation is bound by residues E15, N141, and D191. Residue D191 is the Proton donor/acceptor of the active site.

The protein belongs to the SMP-30/CGR1 family. Monomer. A divalent metal cation is required as a cofactor.

It catalyses the reaction L-arabinono-1,4-lactone + H2O = L-arabinonate + H(+). The catalysed reaction is D-xylono-1,4-lactone + H2O = D-xylonate + H(+). Its pathway is carbohydrate degradation. Pentonolactonase involved in D-arabinose and D-xylose catabolism. Catalyzes the hydrolysis of both L-arabino-gamma-lactone and D-xylono-gamma-lactone to the corresponding acids. Can also hydrolyze D-galactono-gamma-lactone and D-glucono-delta-lactone. The chain is Pentonolactonase XacC from Haloferax volcanii (strain ATCC 29605 / DSM 3757 / JCM 8879 / NBRC 14742 / NCIMB 2012 / VKM B-1768 / DS2) (Halobacterium volcanii).